Reading from the N-terminus, the 423-residue chain is Protein CLP1 homolog (423 aa).

Residues Glu16, Lys57, and 119–124 (DVGKST) contribute to the ATP site.

The protein belongs to the Clp1 family. Clp1 subfamily.

The protein resides in the nucleus. Required for endonucleolytic cleavage during polyadenylation-dependent pre-mRNA 3'-end formation. The chain is Protein CLP1 homolog (cbc) from Drosophila simulans (Fruit fly).